The sequence spans 325 residues: Putative S-adenosyl-L-methionine-dependent methyltransferase MT0917 (325 aa).

S-adenosyl-L-methionine-binding positions include Asp126 and 155-156 (DL).

The protein belongs to the UPF0677 family.

Functionally, exhibits S-adenosyl-L-methionine-dependent methyltransferase activity. The protein is Putative S-adenosyl-L-methionine-dependent methyltransferase MT0917 of Mycobacterium tuberculosis (strain CDC 1551 / Oshkosh).